The chain runs to 338 residues: DNA-directed RNA polymerase subunit alpha (338 aa).

Residues 1 to 234 are alpha N-terminal domain (alpha-NTD); it reads MIHKNWQELI…DQLSIFVNFD (234 aa). The tract at residues 250–338 is alpha C-terminal domain (alpha-CTD); it reads FNPLLLKKVD…ELAKKYEDNF (89 aa).

This sequence belongs to the RNA polymerase alpha chain family. In terms of assembly, homodimer. The RNAP catalytic core consists of 2 alpha, 1 beta, 1 beta' and 1 omega subunit. When a sigma factor is associated with the core the holoenzyme is formed, which can initiate transcription.

The enzyme catalyses RNA(n) + a ribonucleoside 5'-triphosphate = RNA(n+1) + diphosphate. Functionally, DNA-dependent RNA polymerase catalyzes the transcription of DNA into RNA using the four ribonucleoside triphosphates as substrates. This chain is DNA-directed RNA polymerase subunit alpha, found in Jannaschia sp. (strain CCS1).